The primary structure comprises 1237 residues: Phosphorylase b kinase regulatory subunit alpha, skeletal muscle isoform (1237 aa).

S629, S729, S735, and S758 each carry phosphoserine. Positions 810 to 840 (LTELYGKVGKIRHWGLIRYISGILRKKVEAL) are calmodulin-binding. S972 is subject to Phosphoserine; by autocatalysis. A Phosphoserine modification is found at S981. Residues S985 and S1007 each carry the phosphoserine; by autocatalysis modification. Position 1018 is a phosphoserine; by PKA (S1018). Phosphoserine occurs at positions 1020, 1023, and 1030. The segment at 1021 to 1069 (TESQPNGGHSLGADLMSPSFLSPGTSVTPSSGSFPGHHTSKDSRQGQWQ) is disordered. Positions 1042 to 1056 (SPGTSVTPSSGSFPG) are enriched in low complexity. The interval 1060–1100 (SKDSRQGQWQRRRRLDGALNRVPIGFYQKVWKVLQKCHGLS) is calmodulin-binding. Residue S1127 is modified to Phosphoserine. C1234 carries the S-farnesyl cysteine lipid modification.

Belongs to the phosphorylase b kinase regulatory chain family. In terms of assembly, hexadecamer of 4 heterotetramers, each composed of alpha, beta, gamma, and delta subunits. Alpha (PHKA1 or PHKA2) and beta (PHKB) are regulatory subunits, gamma (PHKG1 or PHKG2) is the catalytic subunit, and delta is calmodulin. Phosphorylation of Ser-1018 by PKA stimulates the dephosphorylation of the beta subunit and, thus, reverses the initial stimulation of PHK by the faster beta-subunit phosphorylation by PKA, that occurs in muscle in response to adrenaline. In terms of processing, cys-1234 is farnesylated, but the C-terminal tripeptide is not removed and the cysteine carboxyl is not methylated. Isoform 1 predominates in muscle, heart, brain and testis. Isoforms 1 and 2 are expressed in similar quantities in the other tissues. Isoform 3 is highly expressed in slow muscle and heart.

Its subcellular location is the cell membrane. It functions in the pathway glycan biosynthesis; glycogen metabolism. Its activity is regulated as follows. By phosphorylation of various serine residues and by calcium. Phosphorylase b kinase catalyzes the phosphorylation of serine in certain substrates, including troponin I. The alpha chain may bind calmodulin. The chain is Phosphorylase b kinase regulatory subunit alpha, skeletal muscle isoform (PHKA1) from Oryctolagus cuniculus (Rabbit).